We begin with the raw amino-acid sequence, 130 residues long: Small ribosomal subunit protein uS8 (130 aa).

It belongs to the universal ribosomal protein uS8 family. In terms of assembly, part of the 30S ribosomal subunit. Contacts proteins S5 and S12.

One of the primary rRNA binding proteins, it binds directly to 16S rRNA central domain where it helps coordinate assembly of the platform of the 30S subunit. In Klebsiella pneumoniae subsp. pneumoniae (strain ATCC 700721 / MGH 78578), this protein is Small ribosomal subunit protein uS8.